We begin with the raw amino-acid sequence, 638 residues long: 3D-(3,5/4)-trihydroxycyclohexane-1,2-dione hydrolase (638 aa).

Position 67 (E67) interacts with thiamine diphosphate. The segment at 442-523 (SLPGDLQRLW…INIMLFDNSG (82 aa)) is thiamine pyrophosphate binding. Mg(2+) contacts are provided by D494 and N521.

Belongs to the TPP enzyme family. Requires Mg(2+) as cofactor. Thiamine diphosphate is required as a cofactor.

The enzyme catalyses 3D-3,5/4-trihydroxycyclohexane-1,2-dione + H2O = 5-deoxy-D-glucuronate + H(+). It participates in polyol metabolism; myo-inositol degradation into acetyl-CoA; acetyl-CoA from myo-inositol: step 3/7. Involved in the cleavage of the C1-C2 bond of 3D-(3,5/4)-trihydroxycyclohexane-1,2-dione (THcHDO) to yield 5-deoxy-glucuronate (5DG). This Listeria monocytogenes serotype 4b (strain F2365) protein is 3D-(3,5/4)-trihydroxycyclohexane-1,2-dione hydrolase.